The chain runs to 122 residues: Methylglyoxal synthase (122 aa).

Residues 1–122 (MRIALIAHDK…DLFIKHLKGK (122 aa)) form the MGS-like domain. Substrate is bound by residues His8, Lys12, 34–37 (TGTT), and 54–55 (SG). The active-site Proton donor/acceptor is Asp60. A substrate-binding site is contributed by His87.

Belongs to the methylglyoxal synthase family.

It carries out the reaction dihydroxyacetone phosphate = methylglyoxal + phosphate. Its function is as follows. Catalyzes the formation of methylglyoxal from dihydroxyacetone phosphate. The sequence is that of Methylglyoxal synthase from Acholeplasma laidlawii (strain PG-8A).